Reading from the N-terminus, the 672-residue chain is Negative growth regulatory protein NGR1 (672 aa).

Position 1 is an N-acetylmethionine (Met-1). 2 stretches are compositionally biased toward polar residues: residues 1–13 (MMSN…QRQE) and 23–32 (SSTVETSTEP). Disordered stretches follow at residues 1–40 (MMSN…WMGD) and 77–102 (SSTS…NSTD). Met-2 bears the N-acetylserine mark. RRM domains lie at 36–159 (LWMG…YSPT), 192–271 (FSLF…YATP), and 360–432 (TTVF…WGRP). The span at 77–96 (SSTSSSNNNTSEENAENQQS) shows a compositional bias: low complexity. Ser-524 carries the phosphoserine modification. The segment at 640 to 672 (LNIAPNSNNSKSSIMNKHPNRNNVPPIHPSLLH) is disordered. Positions 645–656 (NSNNSKSSIMNK) are enriched in low complexity.

Its function is as follows. May be an RNA-binding protein involved in control of an RNA processing pathway that influences the regulation of cell growth in early log phase. Can bind to RNA and single-stranded DNA but not double-stranded DNA. The polypeptide is Negative growth regulatory protein NGR1 (NGR1) (Saccharomyces cerevisiae (strain ATCC 204508 / S288c) (Baker's yeast)).